The primary structure comprises 436 residues: Proteasome-activating nucleotidase (436 aa).

The stretch at 15-97 (EELCRLYRSL…LKSESEQLRS (83 aa)) forms a coiled coil. Residues 222–227 (GTGKTL) and H361 contribute to the ATP site. A docks into pockets in the proteasome alpha-ring to cause gate opening region spans residues 434 to 436 (MFA).

Belongs to the AAA ATPase family. In terms of assembly, homohexamer. The hexameric complex has a two-ring architecture resembling a top hat that caps the 20S proteasome core at one or both ends. Upon ATP-binding, the C-terminus of PAN interacts with the alpha-rings of the proteasome core by binding to the intersubunit pockets.

The protein resides in the cytoplasm. ATPase which is responsible for recognizing, binding, unfolding and translocation of substrate proteins into the archaeal 20S proteasome core particle. Is essential for opening the gate of the 20S proteasome via an interaction with its C-terminus, thereby allowing substrate entry and access to the site of proteolysis. Thus, the C-termini of the proteasomal ATPase function like a 'key in a lock' to induce gate opening and therefore regulate proteolysis. Unfolding activity requires energy from ATP hydrolysis, whereas ATP binding alone promotes ATPase-20S proteasome association which triggers gate opening, and supports translocation of unfolded substrates. In Methanoregula boonei (strain DSM 21154 / JCM 14090 / 6A8), this protein is Proteasome-activating nucleotidase.